A 270-amino-acid polypeptide reads, in one-letter code: Putative carbamate hydrolase RutD (270 aa).

The protein belongs to the AB hydrolase superfamily. Hydrolase RutD family.

It carries out the reaction carbamate + 2 H(+) = NH4(+) + CO2. Involved in pyrimidine catabolism. May facilitate the hydrolysis of carbamate, a reaction that can also occur spontaneously. This Escherichia coli (strain SMS-3-5 / SECEC) protein is Putative carbamate hydrolase RutD.